A 131-amino-acid chain; its full sequence is MYNKVIAIGRLVAKPELVKTATDKHVARLSLAVNRRFKNASGEREADFISVVVWGKLAETLVSYASKGSLMSIDGELRTRKYDKDGQVHYVTEVLCQSFQLLESRAQRAMRENNVTNDLVDLVLEEDTLPF.

The 103-residue stretch at 1 to 103 folds into the SSB domain; the sequence is MYNKVIAIGR…VLCQSFQLLE (103 aa).

As to quaternary structure, homotetramer.

In Streptococcus pyogenes serotype M6 (strain ATCC BAA-946 / MGAS10394), this protein is Single-stranded DNA-binding protein 1 (ssb1).